A 245-amino-acid polypeptide reads, in one-letter code: 2,3-bisphosphoglycerate-dependent phosphoglycerate mutase (245 aa).

Residues 8–15 (RHGQSLWN), 21–22 (TG), R60, 87–90 (ERHY), K98, 114–115 (RR), and 183–184 (GN) contribute to the substrate site. The Tele-phosphohistidine intermediate role is filled by H9. Residue E87 is the Proton donor/acceptor of the active site.

The protein belongs to the phosphoglycerate mutase family. BPG-dependent PGAM subfamily.

The catalysed reaction is (2R)-2-phosphoglycerate = (2R)-3-phosphoglycerate. The protein operates within carbohydrate degradation; glycolysis; pyruvate from D-glyceraldehyde 3-phosphate: step 3/5. Functionally, catalyzes the interconversion of 2-phosphoglycerate and 3-phosphoglycerate. The sequence is that of 2,3-bisphosphoglycerate-dependent phosphoglycerate mutase from Bacillus cereus (strain ZK / E33L).